Reading from the N-terminus, the 407-residue chain is DNA-directed RNA polymerase subunit Rpo1C (407 aa).

Belongs to the RNA polymerase beta' chain family. As to quaternary structure, part of the RNA polymerase complex.

It localises to the cytoplasm. It carries out the reaction RNA(n) + a ribonucleoside 5'-triphosphate = RNA(n+1) + diphosphate. Its function is as follows. DNA-dependent RNA polymerase (RNAP) catalyzes the transcription of DNA into RNA using the four ribonucleoside triphosphates as substrates. Forms part of the jaw domain. This chain is DNA-directed RNA polymerase subunit Rpo1C, found in Aeropyrum pernix (strain ATCC 700893 / DSM 11879 / JCM 9820 / NBRC 100138 / K1).